Here is a 97-residue protein sequence, read N- to C-terminus: uncharacterized protein (97 aa).

This is an uncharacterized protein from Orgyia pseudotsugata multicapsid polyhedrosis virus (OpMNPV).